The following is a 168-amino-acid chain: Xanthine-guanine phosphoribosyltransferase (168 aa).

5-phospho-alpha-D-ribose 1-diphosphate is bound by residues 43–44 (RG) and 102–110 (DDLVDTGAT). Residue D103 coordinates Mg(2+). Positions 106 and 149 each coordinate guanine. 2 residues coordinate xanthine: D106 and I149. GMP contacts are provided by residues 106–110 (DTGAT) and 148–149 (WI).

Belongs to the purine/pyrimidine phosphoribosyltransferase family. XGPT subfamily. Homotetramer. Requires Mg(2+) as cofactor.

The protein resides in the cell inner membrane. It carries out the reaction GMP + diphosphate = guanine + 5-phospho-alpha-D-ribose 1-diphosphate. The catalysed reaction is XMP + diphosphate = xanthine + 5-phospho-alpha-D-ribose 1-diphosphate. The enzyme catalyses IMP + diphosphate = hypoxanthine + 5-phospho-alpha-D-ribose 1-diphosphate. Its pathway is purine metabolism; GMP biosynthesis via salvage pathway; GMP from guanine: step 1/1. It functions in the pathway purine metabolism; XMP biosynthesis via salvage pathway; XMP from xanthine: step 1/1. In terms of biological role, purine salvage pathway enzyme that catalyzes the transfer of the ribosyl-5-phosphate group from 5-phospho-alpha-D-ribose 1-diphosphate (PRPP) to the N9 position of the 6-oxopurines guanine and xanthine to form the corresponding ribonucleotides GMP (guanosine 5'-monophosphate) and XMP (xanthosine 5'-monophosphate), with the release of PPi. To a lesser extent, also acts on hypoxanthine. The protein is Xanthine-guanine phosphoribosyltransferase of Nitrobacter hamburgensis (strain DSM 10229 / NCIMB 13809 / X14).